The chain runs to 327 residues: Putative pumilio homolog 19 (327 aa).

The PUM-HD domain occupies 1 to 324 (MAVSDNTFSM…NIANILDTFR (324 aa)). 6 Pumilio repeats span residues 79–114 (SDSDYFMSIVTTKFGSRRVQKLLGKSDDVDAFFCAA), 115–149 (ILRRFLHITTDKYASYVTIRAMVVFDKVMKKALYE), 150–185 (RILYHALDLACDQHGCIALNDIITDADDPYYRDQLL), 186–222 (ELVVSNALRLSNDASGNFVVQHVLTLYDSRCIHNIAV), 223–260 (NLYGQCIELSFKKYGSYIVEKLLEVEESMVVVVVELLG), and 261–295 (CDGDRLMRLARNEFGNFVVVKALRFTKEMRMDLFW).

It is found in the cytoplasm. In terms of biological role, sequence-specific RNA-binding protein that regulates translation and mRNA stability by binding the 3'-UTR of target mRNAs. The chain is Putative pumilio homolog 19 (APUM19) from Arabidopsis thaliana (Mouse-ear cress).